The chain runs to 351 residues: Protein Wnt-4 (351 aa).

Residues M1–A22 form the signal peptide. Intrachain disulfides connect C78–C89, C128–C136, C138–C155, C206–C220, C208–C215, C280–C311, C296–C306, C310–C350, C326–C341, C328–C338, and C333–C334. Residue N88 is glycosylated (N-linked (GlcNAc...) asparagine). A lipid anchor (O-palmitoleoyl serine; by PORCN) is attached at S212. N297 is a glycosylation site (N-linked (GlcNAc...) asparagine).

This sequence belongs to the Wnt family. As to quaternary structure, interacts with PORCN. Interacts with PKD1. In terms of processing, palmitoleoylation is required for efficient binding to frizzled receptors. Depalmitoleoylation leads to Wnt signaling pathway inhibition. In terms of tissue distribution, in adults in lung and brain.

The protein localises to the secreted. Its subcellular location is the extracellular space. It localises to the extracellular matrix. Its function is as follows. Ligand for members of the frizzled family of seven transmembrane receptors. Plays an important role in the embryonic development of the urogenital tract and the lung. Required for normal mesenchyme to epithelium transition during embryonic kidney development. Required for the formation of early epithelial renal vesicles during kidney development. Required for normal formation of the Mullerian duct in females, and normal levels of oocytes in the ovaries. Required for normal down-regulation of 3 beta-hydroxysteroid dehydrogenase in the ovary. Required for normal lung development and for normal patterning of trachael cartilage rings. The chain is Protein Wnt-4 (Wnt4) from Mus musculus (Mouse).